The primary structure comprises 620 residues: Delta(14)-sterol reductase LBR (620 aa).

Residues 1–62 (MPGRKFADGE…DIKPLKSFKQ (62 aa)) form the Tudor domain. The Nuclear segment spans residues 1–215 (MPGRKFADGE…TPQRRDLEFG (215 aa)). Residues 52–111 (SDIKPLKSFKQRKSGSTSSSPSRRRSSRSRSRSRSRSPGRAPKGSRRSVSASYQADAKEK) are disordered. Lysine 55 is modified (N6-acetyllysine). Residues serine 59 and serine 67 each carry the phosphoserine modification. Phosphoserine; by CDK1 is present on residues serine 71 and serine 86. Residues 73-88 (SRRRSSRSRSRSRSRS) show a composition bias toward basic residues. At serine 88 the chain carries Phosphoserine. A glycan (O-linked (GlcNAc) serine) is linked at serine 96. Residues serine 99 and serine 101 each carry the phosphoserine modification. The residue at position 123 (threonine 123) is a Phosphothreonine. At serine 133 the chain carries Phosphoserine. Threonine 205 carries the phosphothreonine modification. The next 8 helical transmembrane spans lie at 216-236 (GVPG…LLLL), 263-283 (VCGV…LPVG), 304-324 (LYAF…DIEL), 331-351 (FLQF…YLYA), 452-472 (IIHD…VPFT), 486-506 (DLSW…YVIF), 525-547 (LAHL…WWGF), and 566-586 (PCGF…ALLI). N6-acetyllysine is present on residues lysine 599 and lysine 606.

This sequence belongs to the ERG4/ERG24 family. In terms of assembly, interacts with CBX5. Interacts with DNA. Interaction with DNA is sequence independent with higher affinity for supercoiled and relaxed circular DNA than linear DNA. Interacts with lamin B. Interacts with CLNK. Interacts with TMEM147; promoting LBR localization to the nucleus inner membrane. Post-translationally, phosphorylated by CDK1 in mitosis when the inner nuclear membrane breaks down into vesicles that dissociate from the lamina and the chromatin. It is phosphorylated by different protein kinases in interphase when the membrane is associated with these structures. Phosphorylation of LBR and HP1 proteins may be responsible for some of the alterations in chromatin organization and nuclear structure which occur at various times during the cell cycle. Phosphorylated by SRPK1. In late anaphase LBR is dephosphorylated, probably by PP1 and/or PP2A, allowing reassociation with chromatin.

It is found in the nucleus inner membrane. The protein localises to the nucleus. The protein resides in the cytoplasm. Its subcellular location is the endoplasmic reticulum membrane. The catalysed reaction is 5alpha-cholest-8,14-dien-3beta-ol + NADPH + H(+) = 5alpha-cholest-8-en-3beta-ol + NADP(+). The enzyme catalyses 4,4-dimethyl-5alpha-cholesta-8,24-dien-3beta-ol + NADP(+) = 4,4-dimethyl-5alpha-cholesta-8,14,24-trien-3beta-ol + NADPH + H(+). It carries out the reaction 4,4-dimethyl-8,14-cholestadien-3beta-ol + NADPH + H(+) = 4,4-dimethyl-5alpha-cholest-8-en-3beta-ol + NADP(+). It participates in steroid biosynthesis; cholesterol biosynthesis. Catalyzes the reduction of the C14-unsaturated bond of lanosterol, as part of the metabolic pathway leading to cholesterol biosynthesis. Plays a critical role in myeloid cell cholesterol biosynthesis which is essential to both myeloid cell growth and functional maturation. Mediates the activation of NADPH oxidases, perhaps by maintaining critical levels of cholesterol required for membrane lipid raft formation during neutrophil differentiation. Anchors the lamina and the heterochromatin to the inner nuclear membrane. This Rattus norvegicus (Rat) protein is Delta(14)-sterol reductase LBR (Lbr).